The chain runs to 442 residues: Casein kinase 1-like protein 10 (442 aa).

A Protein kinase domain is found at 9 to 278; that stretch reads FKLGRKIGSG…LKRLFRDLFI (270 aa). ATP is bound by residues 15 to 23 and K38; that span reads IGSGSFGEL. The active-site Proton acceptor is the D128. Disordered stretches follow at residues 299-323 and 381-421; these read GSIS…ERNE and AVMS…LSAR. Pro residues predominate over residues 305–317; the sequence is RPNPKPALDPPGP. Over residues 384–394 the composition is skewed to low complexity; it reads SSSQPGSSGEL. Over residues 400-417 the composition is skewed to polar residues; that stretch reads SKLFSSSAQKIQPVQETK.

This sequence belongs to the protein kinase superfamily. CK1 Ser/Thr protein kinase family. Casein kinase I subfamily. As to quaternary structure, monomer. Post-translationally, autophosphorylated.

The protein localises to the cytoplasm. Its subcellular location is the cell junction. It localises to the plasmodesma. It carries out the reaction L-seryl-[protein] + ATP = O-phospho-L-seryl-[protein] + ADP + H(+). The catalysed reaction is L-threonyl-[protein] + ATP = O-phospho-L-threonyl-[protein] + ADP + H(+). Its function is as follows. Casein kinases are operationally defined by their preferential utilization of acidic proteins such as caseins as substrates. It can phosphorylate a large number of proteins. This chain is Casein kinase 1-like protein 10, found in Arabidopsis thaliana (Mouse-ear cress).